Reading from the N-terminus, the 238-residue chain is Protein-lysine N-methyltransferase efm4 (238 aa).

The protein belongs to the class I-like SAM-binding methyltransferase superfamily. EFM4 family.

The protein resides in the cytoplasm. It is found in the nucleus. S-adenosyl-L-methionine-dependent protein-lysine N-methyltransferase that mono- and dimethylates elongation factor 1-alpha at 'Lys-316'. May play a role in intracellular transport. The sequence is that of Protein-lysine N-methyltransferase efm4 from Schizosaccharomyces pombe (strain 972 / ATCC 24843) (Fission yeast).